Consider the following 119-residue polypeptide: Ribonuclease P protein component (119 aa).

It belongs to the RnpA family. As to quaternary structure, consists of a catalytic RNA component (M1 or rnpB) and a protein subunit.

It catalyses the reaction Endonucleolytic cleavage of RNA, removing 5'-extranucleotides from tRNA precursor.. RNaseP catalyzes the removal of the 5'-leader sequence from pre-tRNA to produce the mature 5'-terminus. It can also cleave other RNA substrates such as 4.5S RNA. The protein component plays an auxiliary but essential role in vivo by binding to the 5'-leader sequence and broadening the substrate specificity of the ribozyme. The polypeptide is Ribonuclease P protein component (Sodalis glossinidius (strain morsitans)).